Here is a 147-residue protein sequence, read N- to C-terminus: MEQTYVMVKPDGVERGLIGEIVTRIEKKGLKIVAGKLMQIDRELAEKHYAEHIGKSFFEDLIGFITSGPVFAMVLEGDDAIATARRMMGKTNPLEADPGTIRADYAVHTNRNVIHGSDSPESAKREIQLFFAPQEILSYQKAIDTWI.

Residues K9, F57, R85, T91, R102, and N112 each coordinate ATP. H115 (pros-phosphohistidine intermediate) is an active-site residue.

Belongs to the NDK family. As to quaternary structure, homotetramer. It depends on Mg(2+) as a cofactor.

It is found in the cytoplasm. It catalyses the reaction a 2'-deoxyribonucleoside 5'-diphosphate + ATP = a 2'-deoxyribonucleoside 5'-triphosphate + ADP. The enzyme catalyses a ribonucleoside 5'-diphosphate + ATP = a ribonucleoside 5'-triphosphate + ADP. Its function is as follows. Major role in the synthesis of nucleoside triphosphates other than ATP. The ATP gamma phosphate is transferred to the NDP beta phosphate via a ping-pong mechanism, using a phosphorylated active-site intermediate. This chain is Nucleoside diphosphate kinase, found in Listeria monocytogenes serotype 4b (strain CLIP80459).